The primary structure comprises 447 residues: Transcriptional enhancer factor TEF-4 (447 aa).

Disordered stretches follow at residues 1-46 (MGEP…GVWS) and 183-218 (TPFT…PPAW). A compositionally biased stretch (low complexity) spans 11 to 20 (DDGSGWTGSE). The span at 25 to 40 (EGTGGSEGAGGDGGPD) shows a compositional bias: gly residues. Positions 38–114 (GPDAEGVWSP…QVLARRKSRE (77 aa)) form a DNA-binding region, TEA. Residues 172–447 (WNVPDVKPFS…QHHIYRLVRD (276 aa)) form a transcriptional activation region. Low complexity predominate over residues 183-206 (TPFTLSLTPPSTDLPGYEPPQALS). Pro residues predominate over residues 207-216 (PLPPPTPSPP).

Interacts with YAP1 and WWTR1/TAZ.

The protein resides in the nucleus. Its function is as follows. Transcription factor which plays a key role in the Hippo signaling pathway, a pathway involved in organ size control and tumor suppression by restricting proliferation and promoting apoptosis. The core of this pathway is composed of a kinase cascade wherein MST1/MST2, in complex with its regulatory protein SAV1, phosphorylates and activates LATS1/2 in complex with its regulatory protein MOB1, which in turn phosphorylates and inactivates YAP1 oncoprotein and WWTR1/TAZ. Acts by mediating gene expression of YAP1 and WWTR1/TAZ, thereby regulating cell proliferation, migration and epithelial mesenchymal transition (EMT) induction. Binds to the SPH and GT-IIC 'enhansons' (5'-GTGGAATGT-3'). May be involved in the gene regulation of neural development. Binds to the M-CAT motif. This Homo sapiens (Human) protein is Transcriptional enhancer factor TEF-4 (TEAD2).